The following is a 339-amino-acid chain: Fructose-1,6-bisphosphatase isozyme 2 (339 aa).

Positions 3–10 (DRSPFETD) are important for interaction with ALDOA. Residues Val18 and 28–32 (TGELT) each bind AMP. 2 residues coordinate Mg(2+): Asp69 and Glu98. Residue 113-114 (KY) coordinates AMP. Mg(2+) is bound by residues Asp119, Leu121, and Asp122. Position 122 (Asp122) interacts with substrate. Residue Arg141 coordinates AMP. Residues 204 to 208 (KKKGK) carry the Nuclear localization signal motif. 213–216 (NEGY) contributes to the substrate binding site. Tyr216 and Tyr219 each carry phosphotyrosine. Substrate-binding positions include 245-249 (YVGSM), Tyr265, and Lys275. Glu281 contributes to the Mg(2+) binding site.

The protein belongs to the FBPase class 1 family. As to quaternary structure, homotetramer. Interacts with ALDOA; the interaction blocks inhibition by physiological concentrations of AMP and reduces inhibition by Ca(2+). Interacts with alpha-actinin and F-actin. The cofactor is Mg(2+).

It localises to the cell junction. It is found in the cytoplasm. The protein localises to the nucleus. Its subcellular location is the myofibril. The protein resides in the sarcomere. It localises to the z line. The enzyme catalyses beta-D-fructose 1,6-bisphosphate + H2O = beta-D-fructose 6-phosphate + phosphate. Its pathway is carbohydrate biosynthesis; gluconeogenesis. Subject to complex allosteric regulation. The enzyme can assume an active R-state, or an inactive T-state. Intermediate conformations may exist. AMP acts as an allosteric inhibitor. Fructose 2,6-bisphosphate acts as a competitive inhibitor. Strongly inhibited by Ca(2+). Functionally, catalyzes the hydrolysis of fructose 1,6-bisphosphate to fructose 6-phosphate in the presence of divalent cations and probably participates in glycogen synthesis from carbohydrate precursors, such as lactate. The protein is Fructose-1,6-bisphosphatase isozyme 2 (Fbp2) of Rattus norvegicus (Rat).